Here is a 247-residue protein sequence, read N- to C-terminus: MSNELIYGIHAVNAVLQRDPARFVEAYVLKGRQDDRLLPVLNELMRLGVSIQEMSRKALDDKAEGANHQGLIARVKPARQLNENDLDDILAQHEQPLLLVLDGVTDPHNLGACLRNADAAGVAAVIVPKDKSAPLTATVSKVACGAAETVPLVRVTNLARTMRALQEKGVWFVGTAGEATHDIYQSKLTGSLAIVMGAEGDGMRRLTRETCDDLIKIPMAGSVSSLNVSVACGVCLFEAVRQRMANR.

3 residues coordinate S-adenosyl-L-methionine: Gly197, Ile217, and Leu226.

The protein belongs to the class IV-like SAM-binding methyltransferase superfamily. RNA methyltransferase TrmH family. RlmB subfamily.

Its subcellular location is the cytoplasm. The enzyme catalyses guanosine(2251) in 23S rRNA + S-adenosyl-L-methionine = 2'-O-methylguanosine(2251) in 23S rRNA + S-adenosyl-L-homocysteine + H(+). Its function is as follows. Specifically methylates the ribose of guanosine 2251 in 23S rRNA. The protein is 23S rRNA (guanosine-2'-O-)-methyltransferase RlmB of Vibrio cholerae serotype O1 (strain ATCC 39315 / El Tor Inaba N16961).